The chain runs to 990 residues: Aminopeptidase Q (990 aa).

The Cytoplasmic portion of the chain corresponds to 2–13 (GPPSSSGFYVSR). The chain crosses the membrane as a helical; Signal-anchor for type II membrane protein span at residues 14–34 (AVALLLAGLVAALLLALAVLA). Residues 35 to 990 (ALYGHCERVP…RIAAWLRRNT (956 aa)) lie on the Lumenal side of the membrane. Residues 48 to 91 (LPGLRDLEAESSPPLRQKPTPTPKPSSARELAVTTTPSNWRPPG) are disordered. Asn-132 and Asn-168 each carry an N-linked (GlcNAc...) asparagine glycan. Glu-240 serves as a coordination point for substrate. N-linked (GlcNAc...) asparagine glycans are attached at residues Asn-261, Asn-288, Asn-319, and Asn-346. Position 379-383 (379-383 (HAMEN)) interacts with substrate. His-415 contributes to the Zn(2+) binding site. Glu-416 acts as the Proton acceptor in catalysis. Positions 419 and 438 each coordinate Zn(2+). Tyr-503 serves as the catalytic Proton donor. Residues Asn-607 and Asn-653 are each glycosylated (N-linked (GlcNAc...) asparagine).

This sequence belongs to the peptidase M1 family. In terms of assembly, homodimer. Requires Zn(2+) as cofactor. Post-translationally, N-glycosylated. In terms of tissue distribution, specifically expressed in placenta and not in other tissues. Mainly found at the cell surface region of the extravillous trophoblasts. Detected on extravillous trophoblasts in the outer layer of the chorion laeve in the fetal membrane Not detected on either fetal amnionic epithelial cells or maternal decidual cells. Also detected in the migrating extravillous trophoblasts in the maternal decidual tissues (at protein level).

It is found in the membrane. Its activity is regulated as follows. Inhibited by bestatin. In terms of biological role, metalloprotease which may be important for placentation by regulating biological activity of key peptides at the embryo-maternal interface. On synthetic substrates it shows a marked preference for Leu-4-methylcoumaryl-7-amide (Leu-MCA) over Met-MCA, Arg-LCA and Lys-LCA. Cleaves the N-terminal amino acid of several peptides such as angiotensin-3, kisspeptin-10 and endokinin C. The polypeptide is Aminopeptidase Q (Homo sapiens (Human)).